A 954-amino-acid polypeptide reads, in one-letter code: Alpha-xylosidase BoGH31A (954 aa).

The signal sequence occupies residues 1-20 (MIMNMKNIFYCLLPGLLLGA). Residue cysteine 21 is the site of N-palmitoyl cysteine attachment. Cysteine 21 is lipidated: S-diacylglycerol cysteine. The PA14 domain maps to 227–366 (TGQEGALTGT…NPEEQGKQSW (140 aa)). Residues aspartate 553 and glutamate 556 contribute to the active site. Aspartate 630 (proton donor) is an active-site residue.

It belongs to the glycosyl hydrolase 31 family.

The protein localises to the cell inner membrane. The enzyme catalyses Hydrolysis of terminal, non-reducing alpha-D-xylose residues with release of alpha-D-xylose.. Its pathway is glucan metabolism; xyloglucan degradation. In terms of biological role, catalyzes the liberation of alpha-xylose from the non-reducing terminal glucose of xyloglucan oligosaccharides in xyloglucan degradation, converting the 'X' to 'G' units. The polypeptide is Alpha-xylosidase BoGH31A (Bacteroides ovatus (strain ATCC 8483 / DSM 1896 / JCM 5824 / BCRC 10623 / CCUG 4943 / NCTC 11153)).